A 72-amino-acid chain; its full sequence is Large ribosomal subunit protein bL31 (72 aa).

Zn(2+) contacts are provided by C16, C18, C37, and C40.

The protein belongs to the bacterial ribosomal protein bL31 family. Type A subfamily. As to quaternary structure, part of the 50S ribosomal subunit. Zn(2+) serves as cofactor.

Binds the 23S rRNA. The protein is Large ribosomal subunit protein bL31 of Buchnera aphidicola subsp. Acyrthosiphon pisum (strain Tuc7).